The following is a 554-amino-acid chain: Asparagine--tRNA ligase, cytoplasmic (554 aa).

It belongs to the class-II aminoacyl-tRNA synthetase family.

Its subcellular location is the cytoplasm. The protein resides in the cytosol. The catalysed reaction is tRNA(Asn) + L-asparagine + ATP = L-asparaginyl-tRNA(Asn) + AMP + diphosphate + H(+). Functionally, catalyzes the attachment of asparagine to tRNA(Asn) in a two-step reaction: asparagine is first activated by ATP to form Asn-AMP and then transferred to the acceptor end of tRNA(Asn). This Saccharomyces cerevisiae (strain ATCC 204508 / S288c) (Baker's yeast) protein is Asparagine--tRNA ligase, cytoplasmic.